The primary structure comprises 157 residues: Crossover junction endodeoxyribonuclease RuvC (157 aa).

Active-site residues include aspartate 7, glutamate 67, and aspartate 140. The Mg(2+) site is built by aspartate 7, glutamate 67, and aspartate 140.

The protein belongs to the RuvC family. As to quaternary structure, homodimer which binds Holliday junction (HJ) DNA. The HJ becomes 2-fold symmetrical on binding to RuvC with unstacked arms; it has a different conformation from HJ DNA in complex with RuvA. In the full resolvosome a probable DNA-RuvA(4)-RuvB(12)-RuvC(2) complex forms which resolves the HJ. Mg(2+) is required as a cofactor.

The protein localises to the cytoplasm. It catalyses the reaction Endonucleolytic cleavage at a junction such as a reciprocal single-stranded crossover between two homologous DNA duplexes (Holliday junction).. In terms of biological role, the RuvA-RuvB-RuvC complex processes Holliday junction (HJ) DNA during genetic recombination and DNA repair. Endonuclease that resolves HJ intermediates. Cleaves cruciform DNA by making single-stranded nicks across the HJ at symmetrical positions within the homologous arms, yielding a 5'-phosphate and a 3'-hydroxyl group; requires a central core of homology in the junction. The consensus cleavage sequence is 5'-(A/T)TT(C/G)-3'. Cleavage occurs on the 3'-side of the TT dinucleotide at the point of strand exchange. HJ branch migration catalyzed by RuvA-RuvB allows RuvC to scan DNA until it finds its consensus sequence, where it cleaves and resolves the cruciform DNA. In Rickettsia massiliae (strain Mtu5), this protein is Crossover junction endodeoxyribonuclease RuvC.